A 151-amino-acid polypeptide reads, in one-letter code: Nucleoside diphosphate kinase (151 aa).

ATP-binding residues include lysine 11, phenylalanine 59, arginine 87, threonine 93, arginine 104, and asparagine 114. Histidine 117 functions as the Pros-phosphohistidine intermediate in the catalytic mechanism.

This sequence belongs to the NDK family. In terms of assembly, homotetramer. The cofactor is Mg(2+).

The protein localises to the cytoplasm. The catalysed reaction is a 2'-deoxyribonucleoside 5'-diphosphate + ATP = a 2'-deoxyribonucleoside 5'-triphosphate + ADP. It carries out the reaction a ribonucleoside 5'-diphosphate + ATP = a ribonucleoside 5'-triphosphate + ADP. Its function is as follows. Major role in the synthesis of nucleoside triphosphates other than ATP. The ATP gamma phosphate is transferred to the NDP beta phosphate via a ping-pong mechanism, using a phosphorylated active-site intermediate. The protein is Nucleoside diphosphate kinase of Prochlorococcus marinus (strain NATL1A).